Reading from the N-terminus, the 165-residue chain is Transcription antitermination protein NusB (165 aa).

The tract at residues 139-165 is disordered; the sequence is EAVRSHRRNKRPAADKPVATDKPAAAE.

The protein belongs to the NusB family.

Involved in transcription antitermination. Required for transcription of ribosomal RNA (rRNA) genes. Binds specifically to the boxA antiterminator sequence of the ribosomal RNA (rrn) operons. The sequence is that of Transcription antitermination protein NusB from Laribacter hongkongensis (strain HLHK9).